The following is a 132-amino-acid chain: Intraflagellar transport protein 20 homolog (132 aa).

The interval 70 to 132 (MKAIGARNLL…EFIDQFIFQK (63 aa)) is IFT57-binding. The stretch at 74-116 (GARNLLKSIAKQREAQQQQLQALIAEKKTQLERYRVEYEALCK) forms a coiled coil.

In terms of assembly, component of the IFT complex B, at least composed of IFT20, IFT22, IFT25, IFT27, IFT46, IFT52, TRAF3IP1/IFT54, IFT57, IFT74, IFT80, IFT81, and IFT88. Interacts directly with IFT57 and KIF3B/Kinesin II subunit. Interacts with IFT88. Interacts with CEP83. Interacts with SPEF2 (via C-terminus). Interacts with CBL and CBLB. Interacts with TRIP11. Interacts with TTC21A. Interacts with SPATA1. Interacts with USH1G. Interacts with CCDC146. Interacts with CEP78; regulating IFT20 stability and localization. Expressed predominantly in the testis (at protein level). Expressed in kidney and retina. Expression is up-regulated during spermiogenesis.

Its subcellular location is the golgi apparatus. It is found in the cis-Golgi network. It localises to the cytoplasm. The protein localises to the cytoskeleton. The protein resides in the microtubule organizing center. Its subcellular location is the centrosome. It is found in the centriole. It localises to the cilium basal body. The protein localises to the cell projection. The protein resides in the cilium. Its subcellular location is the cytoplasmic vesicle. It is found in the secretory vesicle. It localises to the acrosome. Its function is as follows. Part of intraflagellar transport (IFT) particles involved in ciliary process assembly. May play a role in the trafficking of ciliary membrane proteins from the Golgi complex to the cilium. Regulates the ciliary platelet-derived growth factor receptor-alpha (PDGFRA) signaling pathway. Required for protein stability of E3 ubiquitin ligases CBL and CBLB that mediate ubiquitination and internalization of PDGFRA for proper feedback inhibition of PDGFRA signaling. Essential for male fertility. Plays an important role in spermatogenesis, particularly spermiogenesis, when germ cells form flagella. May play a role in the transport of flagellar proteins ODF2 and SPAG16 to build sperm flagella and in the removal of redundant sperm cytoplasm. Also involved in autophagy since it is required for trafficking of ATG16L and the expansion of the autophagic compartment. The chain is Intraflagellar transport protein 20 homolog (Ift20) from Mus musculus (Mouse).